The primary structure comprises 309 residues: Mitochondrial brown fat uncoupling protein 1 (309 aa).

Over 1 to 10 (MLRAPGSDAP) the chain is Mitochondrial intermembrane. A helical membrane pass occupies residues 11-32 (PTLSVRIAAAAGAACLADMITF). 3 Solcar repeats span residues 11–104 (PTLS…VREW), 113–203 (ASLG…MKEA), and 212–297 (DDLP…LKRE). Over 33–75 (PLDTAKVRLQIQGEGQGQPPRAPRYRGVLGTVATLARTEGLQK) the chain is Mitochondrial matrix. Arginine 58 serves as a coordination point for fatty acid 16:0. The helical transmembrane segment at 76–98 (LYSGLPAGLQRQVGFASLRIGLY) threads the bilayer. Topologically, residues 99–118 (DSVREWLSPGQGAAASLGSR) are mitochondrial intermembrane. A helical membrane pass occupies residues 119–135 (ISAGVMTGGAAVFIGQP). Over 136–180 (TEVVKVRLQAQSHLHGRKPRYTGTYNAYRIIATTEGLTGLWKGTT) the chain is Mitochondrial matrix. Residues 181–197 (PNLMRNVIINCTELVTY) traverse the membrane as a helical segment. At 198–214 (DLMKEALVKNHLLADDL) the chain is on the mitochondrial intermembrane side. Residues 215 to 234 (PCHFLSALVAGFCTTVLSSP) form a helical membrane-spanning segment. The Mitochondrial matrix portion of the chain corresponds to 235-268 (VDVVKTRFVNSVPEQYTSVPNCAMTMLTKEGPLA). Cysteine 256 carries the cysteine sulfenic acid (-SOH) modification. A helical transmembrane segment spans residues 269 to 291 (FFKGFVPSFLRLGSWNVIMFVCF). Residue lysine 271 coordinates fatty acid 16:0. At 292–309 (EQLKRELMKSGRTVDCAT) the chain is on the mitochondrial intermembrane side.

It belongs to the mitochondrial carrier (TC 2.A.29) family. As to quaternary structure, most probably functions as a monomer. Binds one purine nucleotide per monomer. However, has also been suggested to function as a homodimer or a homotetramer. Tightly associates with cardiolipin in the mitochondrion inner membrane; may stabilize and regulate its activity. Post-translationally, may undergo sulfenylation upon cold exposure. May increase the sensitivity of UCP1 thermogenic function to the activation by noradrenaline probably through structural effects. May undergo ubiquitin-mediated proteasomal degradation.

The protein localises to the mitochondrion inner membrane. It carries out the reaction H(+)(in) = H(+)(out). With respect to regulation, has no constitutive proton transporter activity and has to be activated by long-chain fatty acids/LCFAs. Inhibited by purine nucleotides. Both purine nucleotides and LCFAs bind the cytosolic side of the transporter and directly compete to activate or inhibit it. Activated by noradrenaline and reactive oxygen species. Despite lacking canonical translational encoding for selenocysteine, a small pool of the protein has been observed to selectively incorporate selenocysteine at 'Cys-256'. Selenocysteine-modified protein is highly sensitive to redox modification and may constitute a pool of protein highly sensitive to activation by elevated levels of reactive oxygen species (ROS). Its function is as follows. Mitochondrial protein responsible for thermogenic respiration, a specialized capacity of brown adipose tissue and beige fat that participates in non-shivering adaptive thermogenesis to temperature and diet variations and more generally to the regulation of energy balance. Functions as a long-chain fatty acid/LCFA and proton symporter, simultaneously transporting one LCFA and one proton through the inner mitochondrial membrane. However, LCFAs remaining associated with the transporter via their hydrophobic tails, it results in an apparent transport of protons activated by LCFAs. Thereby, dissipates the mitochondrial proton gradient and converts the energy of substrate oxydation into heat instead of ATP. Regulates the production of reactive oxygen species/ROS by mitochondria. The sequence is that of Mitochondrial brown fat uncoupling protein 1 from Canis lupus familiaris (Dog).